An 81-amino-acid chain; its full sequence is Putative CNGA1-overlapping antisense gene protein (81 aa).

As to expression, expressed in brain, notably in regions involved in long-term potentiation and long-term depression, such as hippocampal CA1 and CA3, dentate gyrus and cerebellar Purkinje layer.

In Homo sapiens (Human), this protein is Putative CNGA1-overlapping antisense gene protein.